A 334-amino-acid polypeptide reads, in one-letter code: Probable GTP 3',8-cyclase (334 aa).

The Radical SAM core domain occupies 24-256; sequence PYGRKVTGLR…RKKYMIDGVE (233 aa). R33 contributes to the GTP binding site. Residues C40 and C44 each contribute to the [4Fe-4S] cluster site. Y46 lines the S-adenosyl-L-methionine pocket. C47 contacts [4Fe-4S] cluster. K85 provides a ligand contact to GTP. An S-adenosyl-L-methionine-binding site is contributed by G89. T113 is a GTP binding site. S137 is an S-adenosyl-L-methionine binding site. Residue K176 participates in GTP binding. 2 residues coordinate [4Fe-4S] cluster: C269 and C272. 274 to 276 contacts GTP; it reads RLR. C286 contacts [4Fe-4S] cluster.

This sequence belongs to the radical SAM superfamily. MoaA family. Requires [4Fe-4S] cluster as cofactor.

The enzyme catalyses GTP + AH2 + S-adenosyl-L-methionine = (8S)-3',8-cyclo-7,8-dihydroguanosine 5'-triphosphate + 5'-deoxyadenosine + L-methionine + A + H(+). Its pathway is cofactor biosynthesis; molybdopterin biosynthesis. In terms of biological role, catalyzes the cyclization of GTP to (8S)-3',8-cyclo-7,8-dihydroguanosine 5'-triphosphate. The protein is Probable GTP 3',8-cyclase of Methanosarcina mazei (strain ATCC BAA-159 / DSM 3647 / Goe1 / Go1 / JCM 11833 / OCM 88) (Methanosarcina frisia).